Consider the following 663-residue polypeptide: Probable potassium transport system protein Kup (663 aa).

The segment at 1 to 23 (MSDNPSSRAGPEVVPTPPPSPAA) is disordered. A run of 12 helical transmembrane segments spans residues 81 to 101 (PANV…VVTF), 137 to 157 (LLII…VITP), 173 to 193 (PALE…LFFI), 201 to 221 (VGAV…ILGV), 224 to 244 (ILFD…AFFA), 248 to 268 (WHGF…EALY), 283 to 303 (WLLV…AILL), 315 to 335 (LLVP…AAIV), 373 to 393 (IYVP…VLGF), 399 to 419 (LAAA…LLFH), 433 to 453 (AWPL…ANIV), and 455 to 475 (VEEG…LLST).

It belongs to the HAK/KUP transporter (TC 2.A.72) family.

Its subcellular location is the cell inner membrane. It carries out the reaction K(+)(in) + H(+)(in) = K(+)(out) + H(+)(out). Transport of potassium into the cell. Likely operates as a K(+):H(+) symporter. This is Probable potassium transport system protein Kup from Anaeromyxobacter sp. (strain Fw109-5).